The chain runs to 357 residues: MKKYKIIMTGGGSAGHVTPNLALVPKLKELGFEIKYIGSKNGIEKEIITKENIPYYSISSGKLRRYFDIKNFTDPFKVLKGVMDASRILSKEKPDVIFSKGGFVTVPVVIAASMKKIPVVSHESDLTPGLANKIASPFCDTLCVTFPESLKYIKDNKGKLTGTPIREDLLKGDKERGRKFCNFKENKKVLMIIGGSLGSKIINESVRKILNEILKEYNVIHLCGKGNLDESLKNLEGYRQYEYISEELPDLMALADLVISRAGANTIFELLALRKLNILIPLSANASRGDQVLNANSFEKSGYSMVIKEEELNSELLLKSIKDLEKNREKYLNSMKMSKIGNGVNNIIDIIKKSAHM.

UDP-N-acetyl-alpha-D-glucosamine is bound by residues 13-15 (SAG), R166, S196, and Q291.

Belongs to the glycosyltransferase 28 family. MurG subfamily.

The protein localises to the cell membrane. It carries out the reaction di-trans,octa-cis-undecaprenyl diphospho-N-acetyl-alpha-D-muramoyl-L-alanyl-D-glutamyl-meso-2,6-diaminopimeloyl-D-alanyl-D-alanine + UDP-N-acetyl-alpha-D-glucosamine = di-trans,octa-cis-undecaprenyl diphospho-[N-acetyl-alpha-D-glucosaminyl-(1-&gt;4)]-N-acetyl-alpha-D-muramoyl-L-alanyl-D-glutamyl-meso-2,6-diaminopimeloyl-D-alanyl-D-alanine + UDP + H(+). Its pathway is cell wall biogenesis; peptidoglycan biosynthesis. Cell wall formation. Catalyzes the transfer of a GlcNAc subunit on undecaprenyl-pyrophosphoryl-MurNAc-pentapeptide (lipid intermediate I) to form undecaprenyl-pyrophosphoryl-MurNAc-(pentapeptide)GlcNAc (lipid intermediate II). The polypeptide is UDP-N-acetylglucosamine--N-acetylmuramyl-(pentapeptide) pyrophosphoryl-undecaprenol N-acetylglucosamine transferase (Clostridium perfringens (strain SM101 / Type A)).